An 85-amino-acid chain; its full sequence is MAKEELIEMHGLVDEVLPDSRFRVTLDNGHKLVAYTSGKMRKNHIRILAGDQVSLELSPYDLSKGRITFRHIAGRGPGPAQRPSR.

The S1-like domain occupies 1–72; it reads MAKEELIEMH…SKGRITFRHI (72 aa).

Belongs to the IF-1 family. In terms of assembly, component of the 30S ribosomal translation pre-initiation complex which assembles on the 30S ribosome in the order IF-2 and IF-3, IF-1 and N-formylmethionyl-tRNA(fMet); mRNA recruitment can occur at any time during PIC assembly.

The protein localises to the cytoplasm. One of the essential components for the initiation of protein synthesis. Stabilizes the binding of IF-2 and IF-3 on the 30S subunit to which N-formylmethionyl-tRNA(fMet) subsequently binds. Helps modulate mRNA selection, yielding the 30S pre-initiation complex (PIC). Upon addition of the 50S ribosomal subunit IF-1, IF-2 and IF-3 are released leaving the mature 70S translation initiation complex. In Polaromonas sp. (strain JS666 / ATCC BAA-500), this protein is Translation initiation factor IF-1 2.